Consider the following 478-residue polypeptide: Kynureninase (478 aa).

Residues Leu150, Thr151, 178–181, Ser234, Asp263, His266, and Tyr288 contribute to the pyridoxal 5'-phosphate site; that span reads FPSD. Residue Lys289 is modified to N6-(pyridoxal phosphate)lysine. Residues Trp318 and Asn346 each coordinate pyridoxal 5'-phosphate.

The protein belongs to the kynureninase family. As to quaternary structure, homodimer. Requires pyridoxal 5'-phosphate as cofactor.

Its subcellular location is the cytoplasm. It catalyses the reaction L-kynurenine + H2O = anthranilate + L-alanine + H(+). It carries out the reaction 3-hydroxy-L-kynurenine + H2O = 3-hydroxyanthranilate + L-alanine + H(+). It functions in the pathway amino-acid degradation; L-kynurenine degradation; L-alanine and anthranilate from L-kynurenine: step 1/1. The protein operates within cofactor biosynthesis; NAD(+) biosynthesis; quinolinate from L-kynurenine: step 2/3. In terms of biological role, catalyzes the cleavage of L-kynurenine (L-Kyn) and L-3-hydroxykynurenine (L-3OHKyn) into anthranilic acid (AA) and 3-hydroxyanthranilic acid (3-OHAA), respectively. The polypeptide is Kynureninase (Caenorhabditis elegans).